Consider the following 266-residue polypeptide: Mitochondrial import inner membrane translocase subunit Tim29 (266 aa).

A mitochondrion-targeting transit peptide spans 1-37 (MVTAALKRFWSGGHGEAGGEAGGATTVAVKPGLWTRL). The Mitochondrial matrix segment spans residues 38 to 65 (STWAGALLRDYAEACGDAAAAARARPGR). The helical transmembrane segment at 66 to 83 (AALYVGLLGGAAACCALA) threads the bilayer. Topologically, residues 84 to 266 (PSEAAFEEAL…DSLVQSDVSR (183 aa)) are mitochondrial intermembrane.

In terms of assembly, component of the TIM22 complex, which core is composed of TIMM22, associated with TIMM10 (TIMM10A and/or TIMM10B), TIMM9, AGK and TIMM29. Interacts with TIMM10B; the interaction is direct. Interacts with TOMM40; linking the TIM22 complex to the TOM complex. Interacts with TIMM22 (when oxidized); the interaction is direct.

It is found in the mitochondrion inner membrane. In terms of biological role, component of the TIM22 complex, a complex that mediates the import and insertion of multi-pass transmembrane proteins into the mitochondrial inner membrane. The TIM22 complex forms a twin-pore translocase that uses the membrane potential as the external driving force. Required for the stability of the TIM22 complex and functions in the assembly of the TIMM22 protein into the TIM22 complex. May facilitate cooperation between TIM22 and TOM complexes by interacting with TOMM40. This chain is Mitochondrial import inner membrane translocase subunit Tim29 (Timm29), found in Mus musculus (Mouse).